A 234-amino-acid chain; its full sequence is BTB/POZ domain-containing protein KCTD5 (234 aa).

N-acetylalanine is present on alanine 2. A BTB domain is found at 44–146; it reads KWVRLNVGGT…LVKDKIRERD (103 aa). The segment at 211–234 is disordered; sequence NSPHGPASEPSEKAKILQERGSRM. Positions 220–234 are enriched in basic and acidic residues; it reads PSEKAKILQERGSRM.

As to quaternary structure, homopentamer. Interacts (via C-terminus) with GRASP55/GORASP2. Interacts with CUL3 and with ubiquitinated proteins. Interacts with CRY1.

It localises to the cytoplasm. It is found in the cytosol. The protein resides in the nucleus. Its function is as follows. Its interaction with CUL3 suggests that it may act as a substrate adapter in some E3 ligase complex. Does not affect the function of Kv channel Kv2.1/KCNB1, Kv1.2/KCNA2, Kv4.2/KCND2 and Kv3.4/KCNC4. The protein is BTB/POZ domain-containing protein KCTD5 (KCTD5) of Bos taurus (Bovine).